A 525-amino-acid chain; its full sequence is ESX-1 secretion-associated protein EspE (525 aa).

2 disordered regions span residues 244–341 and 375–494; these read AVAG…PGAA and ALQA…APVH. The segment covering 248-258 has biased composition (acidic residues); it reads DADDTTADDTA. A compositionally biased stretch (basic and acidic residues) spans 274–286; sequence ETSKEDGQSRHEN. The segment covering 292 to 306 has biased composition (gly residues); the sequence is SGGGGGATSGGGGGA. Composition is skewed to low complexity over residues 307–319, 332–341, and 375–397; these read PSSA…AGTP, TPTDAQPGAA, and ALQA…AAAP. Basic and acidic residues predominate over residues 411–440; that stretch reads DPDAEGDKDSDKRDGEGKEDGTAPRDREST.

It is found in the cytoplasm. The sequence is that of ESX-1 secretion-associated protein EspE from Mycolicibacterium smegmatis (strain ATCC 700084 / mc(2)155) (Mycobacterium smegmatis).